A 588-amino-acid chain; its full sequence is Actin-histidine N-methyltransferase (588 aa).

The interval 1–25 (MGKKSRVKTQKSGTGATASVSPKET) is disordered. Over residues 10 to 25 (QKSGTGATASVSPKET) the composition is skewed to polar residues. S-adenosyl-L-methionine is bound by residues Arg75, 104-106 (EGF), Arg254, 275-279 (DMCNH), and 325-327 (SGF). The region spanning 94 to 314 (EGFEMVNFKE…AGEQIYIFYG (221 aa)) is the SET domain. Positions 546–588 (VNGENSIPNGTRSGKENFNQEGSERATEGTKESSSDSTAGARE) are disordered. The segment covering 548–566 (GENSIPNGTRSGKENFNQE) has biased composition (polar residues). Residues 567–579 (GSERATEGTKESS) show a composition bias toward basic and acidic residues.

This sequence belongs to the class V-like SAM-binding methyltransferase superfamily. SETD3 actin-histidine methyltransferase family. As to quaternary structure, interacts with MYOD1. In terms of processing, phosphorylated by GSK3B, which is required for recognition by the SCF(FBXW7) complex and subsequent degradation. Post-translationally, ubiquitinated by the SCF(FBXW7) complex following phosphorylation by GSK3B, leading to its degradation by the proteasome.

The protein resides in the cytoplasm. It localises to the nucleus. It carries out the reaction L-histidyl-[protein] + S-adenosyl-L-methionine = N(tele)-methyl-L-histidyl-[protein] + S-adenosyl-L-homocysteine + H(+). In terms of biological role, protein-histidine N-methyltransferase that specifically mediates 3-methylhistidine (tele-methylhistidine) methylation of actin at 'His-73'. Histidine methylation of actin is required for smooth muscle contraction of the laboring uterus during delivery. Does not have protein-lysine N-methyltransferase activity and probably only catalyzes histidine methylation of actin. The chain is Actin-histidine N-methyltransferase from Canis lupus familiaris (Dog).